A 99-amino-acid chain; its full sequence is Ubiquitin-related modifier 1 (99 aa).

The residue at position 99 (Gly99) is a 1-thioglycine. Gly99 participates in a covalent cross-link: Glycyl lysine isopeptide (Gly-Lys) (interchain with K-? in acceptor proteins).

It belongs to the URM1 family. As to quaternary structure, homodimer; homodimerization may provide an autoprotection to the highly active C-terminal residue before attacking its substrates. Interacts with NCS2 and NCS6. Forms a conjugate with the target protein AHP1. C-terminal thiocarboxylation occurs in 2 steps, it is first acyl-adenylated (-COAMP) via the hesA/moeB/thiF part of UBA4, then thiocarboxylated (-COSH) via the rhodanese domain of UBA4.

The protein localises to the cytoplasm. It is found in the nucleus. It participates in tRNA modification; 5-methoxycarbonylmethyl-2-thiouridine-tRNA biosynthesis. Acts as a sulfur carrier required for 2-thiolation of mcm(5)S(2)U at tRNA wobble positions of cytosolic tRNA(Lys), tRNA(Glu) and tRNA(Gln). Serves as sulfur donor in tRNA 2-thiolation reaction by being thiocarboxylated (-COSH) at its C-terminus by the MOCS3 homolog UBA4. The sulfur is then transferred to tRNA to form 2-thiolation of mcm(5)S(2)U. Prior mcm(5) tRNA modification by the elongator complex is required for 2-thiolation. Also acts as a ubiquitin-like protein (UBL) that is covalently conjugated via an isopeptide bond to lysine residues of target proteins such as AHP1. The thiocarboxylated form serves as substrate for conjugation and oxidative stress specifically induces the formation of UBL-protein conjugates. This is Ubiquitin-related modifier 1 from Saccharomyces cerevisiae (strain RM11-1a) (Baker's yeast).